The primary structure comprises 331 residues: Probable allantoicase (331 aa).

This sequence belongs to the allantoicase family.

It carries out the reaction allantoate + H2O = (S)-ureidoglycolate + urea. The protein operates within nitrogen metabolism; (S)-allantoin degradation; (S)-ureidoglycolate from allantoate (aminidohydrolase route): step 1/1. The protein is Probable allantoicase of Pseudomonas fluorescens (strain Pf0-1).